The primary structure comprises 1188 residues: uncharacterized protein (1188 aa).

Disordered stretches follow at residues 126–468 (GDLR…SQME), 484–771 (EDRF…LYKP), 790–823 (ARGG…TDEL), and 847–1039 (QRAQ…FSRF). 3 stretches are compositionally biased toward pro residues: residues 139 to 151 (IPPP…PGPP), 159 to 193 (GGSP…PPPV), and 208 to 240 (IPTP…PAPA). A Phosphoserine modification is found at serine 260. Positions 322–331 (EAPRKEEGAT) are enriched in basic and acidic residues. Pro residues predominate over residues 389–418 (TPPPAPPLPPPAPPLPPPAPPLPPAAPPLP). A compositionally biased stretch (low complexity) spans 432–441 (KTPKSSSPAL). Basic and acidic residues-rich tracts occupy residues 501 to 514 (KEGK…EKET) and 566 to 583 (IRNE…KEAK). Residues 618–633 (LPPQSTTLLPTTSLQP) show a composition bias toward low complexity. Positions 640–652 (AIPPKATPEPAIP) are enriched in pro residues. Threonine 666 carries the post-translational modification Phosphothreonine. A compositionally biased stretch (low complexity) spans 689–703 (PAIASTATTLPTTTS). The segment covering 875 to 893 (AEASSDSIFHSQGTPNSFT) has biased composition (polar residues). Basic and acidic residues predominate over residues 920–931 (LGRDAEGTELSR). The segment covering 986 to 1001 (IPPPPEFSNDPEPPAP) has biased composition (pro residues). Polar residues predominate over residues 1007-1019 (GRQSSPPRNNYSD). Residues 1026–1035 (AGPGAPPALG) are compositionally biased toward low complexity. Asymmetric dimethylarginine is present on arginine 1044. The disordered stretch occupies residues 1069–1160 (GEPHRGPGLP…SPYTTTRYGS (92 aa)). An omega-N-methylarginine mark is found at arginine 1073 and arginine 1084. At arginine 1157 the chain carries Asymmetric dimethylarginine.

This is an uncharacterized protein from Homo sapiens (Human).